The sequence spans 693 residues: Sodium-dependent phosphate transport protein 2B (693 aa).

The segment at 1-46 is disordered; it reads MAPWPELENSQPTSEKYTVKADGEQSAKPEKAKETEKDDTGTPITK. Topologically, residues 1–89 are cytoplasmic; that stretch reads MAPWPELENS…KWSERDTKGK (89 aa). Positions 17–40 are enriched in basic and acidic residues; the sequence is YTVKADGEQSAKPEKAKETEKDDT. A helical membrane pass occupies residues 90-110; it reads ILCVFQGIGKFILLLVFLYFF. Over 111 to 135 the chain is Extracellular; it reads VCSLDVLSSAFQLVGGKVAGKFFNN. The helical transmembrane segment at 136–156 threads the bilayer; it reads NSIMSNPLAGMVIGVLVTVLV. Residues 157-212 are Cytoplasmic-facing; it reads QSSSTSTSIVVSMVASSLLPVHAAIPIIMGANIGTSITNTIVALMQAGDRKEFRRA. Residues 213–233 traverse the membrane as a helical segment; sequence FAGATVHDFFNWLSVLVLLPL. The Extracellular segment spans residues 234-361; the sequence is EAATGYLERL…IFVNFNLSDA (128 aa). A disulfide bridge links Cys302 with Cys349. N-linked (GlcNAc...) asparagine glycans are attached at residues Asn307 and Asn320. Residues 362–382 form a helical membrane-spanning segment; that stretch reads IVGTILLITSLLILCTCLILI. The Cytoplasmic portion of the chain corresponds to 383-408; the sequence is VKLLGSVLRGQVAAVIKKTINTDFPY. A helical transmembrane segment spans residues 409–429; that stretch reads PFSWVTGYLAILVGAGMTFIV. Topologically, residues 430–485 are extracellular; it reads QSSSVFTSAMTPLIGIGVISIQRAYPLTLGANIGTTTTAILAALASPGSTLKSSLQ. A helical transmembrane segment spans residues 486 to 506; sequence IALCHFFFNISGIILWYPIPF. The Cytoplasmic segment spans residues 507-525; sequence TRLPIRLAKGLGNISSKYR. Residues 526–546 form a helical membrane-spanning segment; it reads WFAIVYLIVFFLLIPLAVFGL. Over 547–550 the chain is Extracellular; the sequence is SLIG. The chain crosses the membrane as a helical span at residues 551–571; the sequence is WPVLVGVASPIVLVILLVVVL. Over 572–693 the chain is Cytoplasmic; that stretch reads KILQSFCPGS…TKIVSSVTAL (122 aa).

This sequence belongs to the SLC34A transporter family. Post-translationally, glycosylated.

It is found in the apical cell membrane. The catalysed reaction is 3 Na(+)(out) + phosphate(out) = 3 Na(+)(in) + phosphate(in). Functionally, involved in actively transporting phosphate into cells via Na(+) cotransport. This chain is Sodium-dependent phosphate transport protein 2B (SLC34A2), found in Bos taurus (Bovine).